The following is a 45-amino-acid chain: Large ribosomal subunit protein bL34 (45 aa).

This sequence belongs to the bacterial ribosomal protein bL34 family.

This chain is Large ribosomal subunit protein bL34 (rpmH), found in Streptomyces bikiniensis.